A 184-amino-acid chain; its full sequence is MLPICVVNNYGQFNHLIHRALRDLDIDAVLIPNTTPREEIASQYRGIILGGGPDIARAGVCAEYLDLGIPVLGICLGLHIIARKFGGVVHPGKSGGYGSVEVTIREHDDILSGYPDIIPVWASHADEVCRIPEGFTLLASSGICEVEAVACPRKRIYGLQWHPEVSHTVGGKRVYENFDAICTE.

The Glutamine amidotransferase type-1 domain maps to 3 to 184 (PICVVNNYGQ…YENFDAICTE (182 aa)). The active-site Nucleophile is the C75. Residues H162 and E164 contribute to the active site.

In terms of assembly, heterodimer composed of a glutamine amidotransferase subunit (A) and a GMP-binding subunit (B).

The catalysed reaction is XMP + L-glutamine + ATP + H2O = GMP + L-glutamate + AMP + diphosphate + 2 H(+). It functions in the pathway purine metabolism; GMP biosynthesis; GMP from XMP (L-Gln route): step 1/1. Functionally, catalyzes the synthesis of GMP from XMP. In Methanoregula boonei (strain DSM 21154 / JCM 14090 / 6A8), this protein is GMP synthase [glutamine-hydrolyzing] subunit A.